We begin with the raw amino-acid sequence, 407 residues long: Chorismate synthase (407 aa).

Arg40 and Arg46 together coordinate NADP(+). FMN-binding positions include 138–140 (RAS) and 259–260 (QA). Positions 275-284 (RRGSRAHDEM) are enriched in basic and acidic residues. The interval 275 to 308 (RRGSRAHDEMYPGTDGVVRSTNRAGGLEGGMTNG) is disordered. FMN contacts are provided by residues Gly303, 318–322 (KPIST), and Arg344.

The protein belongs to the chorismate synthase family. In terms of assembly, homotetramer. Requires FMNH2 as cofactor.

It carries out the reaction 5-O-(1-carboxyvinyl)-3-phosphoshikimate = chorismate + phosphate. It participates in metabolic intermediate biosynthesis; chorismate biosynthesis; chorismate from D-erythrose 4-phosphate and phosphoenolpyruvate: step 7/7. Its function is as follows. Catalyzes the anti-1,4-elimination of the C-3 phosphate and the C-6 proR hydrogen from 5-enolpyruvylshikimate-3-phosphate (EPSP) to yield chorismate, which is the branch point compound that serves as the starting substrate for the three terminal pathways of aromatic amino acid biosynthesis. This reaction introduces a second double bond into the aromatic ring system. The protein is Chorismate synthase of Mycobacterium marinum (strain ATCC BAA-535 / M).